A 138-amino-acid chain; its full sequence is Small ribosomal subunit protein bS16 (138 aa).

The segment at 92-138 (QAAKREADAKQAAKEAAEAKAAAEAEAKAAAEAESADAGAEEAPAEA) is disordered. A compositionally biased stretch (basic and acidic residues) spans 94–122 (AKREADAKQAAKEAAEAKAAAEAEAKAAA).

It belongs to the bacterial ribosomal protein bS16 family.

This is Small ribosomal subunit protein bS16 from Synechococcus sp. (strain WH7803).